The chain runs to 542 residues: MSILALVEDRPTPKEVYNWKIYLLAAVASFTSCMIGYDSAFIGTTLALSSFREEFGFSTMSKTAVNLVSANIVSCYQAGAFFGAFFAYPIGHFWGRKWGLLFAGTIFTLGAGLMLGANGDRGLGLLYGGRVLAGLGVGAGSNITPIYISEMAPPSIRGRLVGVYELGWQIGGLVGFWINYGVSETLAPSHKQWIIPFAVQLIPSGLLLIGAVFLKESPRWLFSRGRREDAIKNLCWIRQLPADHIYMIEEIGAVDQALEEQRTTIGLGFWKPFKAAGTNKKVMYRLFLGSMLFFWQNGSGINAINYYSPTVFKSIGLHGANTSMFSTGIFGVVKTVVTFVWLLYLIDRLGRRLLLLIGAAGAAVCLLIVGAYIKIADPASNPTQEMTGGGIAAMFFFYLYTVFYTPSWNGTPWVMNSEMFEPNMRSLAQACAAASNWLWNFLISRFTPQMFAKMEYGVWFFFASLMLLSIVFVFFLVPETKGIPLESMDVLFESKPIWRAHATVLAKLREDEEQFRHDIEESGYSKTGEQQVEHVSEDLPKV.

The Cytoplasmic segment spans residues 1 to 22 (MSILALVEDRPTPKEVYNWKIY). The chain crosses the membrane as a helical span at residues 23–43 (LLAAVASFTSCMIGYDSAFIG). Residues 44–74 (TTLALSSFREEFGFSTMSKTAVNLVSANIVS) are Extracellular-facing. Residues 75-95 (CYQAGAFFGAFFAYPIGHFWG) form a helical membrane-spanning segment. Over 96–97 (RK) the chain is Cytoplasmic. A helical membrane pass occupies residues 98-118 (WGLLFAGTIFTLGAGLMLGAN). Over 119–130 (GDRGLGLLYGGR) the chain is Extracellular. Residues 131 to 151 (VLAGLGVGAGSNITPIYISEM) form a helical membrane-spanning segment. Topologically, residues 152–159 (APPSIRGR) are cytoplasmic. Residues 160–180 (LVGVYELGWQIGGLVGFWINY) traverse the membrane as a helical segment. At 181–193 (GVSETLAPSHKQW) the chain is on the extracellular side. Residues 194-214 (IIPFAVQLIPSGLLLIGAVFL) form a helical membrane-spanning segment. Residues 215–285 (KESPRWLFSR…AGTNKKVMYR (71 aa)) are Cytoplasmic-facing. Residues 286–306 (LFLGSMLFFWQNGSGINAINY) traverse the membrane as a helical segment. Over 307 to 325 (YSPTVFKSIGLHGANTSMF) the chain is Extracellular. A helical transmembrane segment spans residues 326–346 (STGIFGVVKTVVTFVWLLYLI). At 347–352 (DRLGRR) the chain is on the cytoplasmic side. The helical transmembrane segment at 353–373 (LLLLIGAAGAAVCLLIVGAYI) threads the bilayer. Residues 374–387 (KIADPASNPTQEMT) lie on the Extracellular side of the membrane. Residues 388 to 408 (GGGIAAMFFFYLYTVFYTPSW) traverse the membrane as a helical segment. At 409 to 456 (NGTPWVMNSEMFEPNMRSLAQACAAASNWLWNFLISRFTPQMFAKMEY) the chain is on the cytoplasmic side. Residues 457–477 (GVWFFFASLMLLSIVFVFFLV) form a helical membrane-spanning segment. Topologically, residues 478-542 (PETKGIPLES…EHVSEDLPKV (65 aa)) are extracellular. The disordered stretch occupies residues 523-542 (GYSKTGEQQVEHVSEDLPKV). Residues 531-542 (QVEHVSEDLPKV) show a composition bias toward basic and acidic residues.

Belongs to the major facilitator superfamily. Sugar transporter (TC 2.A.1.1) family. In terms of assembly, interacts with creB. Post-translationally, ubiquitinated. Deubiquitinated by creB, probably to control its activity or amount.

It is found in the cell membrane. Integral membrane transporter that imports quinic acid to be catabolized as a carbon source. This Aspergillus fumigatus (strain CBS 144.89 / FGSC A1163 / CEA10) (Neosartorya fumigata) protein is Probable quinate permease (qutD).